A 161-amino-acid chain; its full sequence is AP-1 complex subunit sigma-1 (161 aa).

The protein belongs to the adaptor complexes small subunit family. Adaptor protein complex 1 (AP-1) is a heterotetramer composed of two large adaptins (gamma-type subunit and beta-type subunit), a medium adaptin (mu-type subunit) and a small adaptin (sigma-type subunit). In terms of tissue distribution, expressed in seedlings, roots, stems, leaves, flowers and siliques (developing fruits and seeds).

Its subcellular location is the golgi apparatus. It localises to the cytoplasmic vesicle. The protein resides in the clathrin-coated vesicle membrane. Its function is as follows. Subunit of clathrin-associated adaptor protein complex 1 that plays a role in protein sorting at the trans-Golgi network and early endosomes (TGN/EE). The AP complexes mediate the recruitment of clathrin to membranes and the recognition of sorting signals within the cytosolic tails of transmembrane cargo molecules. The polypeptide is AP-1 complex subunit sigma-1 (AAP19-1) (Arabidopsis thaliana (Mouse-ear cress)).